We begin with the raw amino-acid sequence, 109 residues long: RNA-binding protein Hfq (109 aa).

In terms of domain architecture, Sm spans 9–68; that stretch reads DPFLNALRKEKVSVSVYLVNGIKLQGQVEAFDQFCIVLRNTVNQMVYKHAISTIVPAKSV.

The protein belongs to the Hfq family. As to quaternary structure, homohexamer.

Functionally, RNA chaperone that binds small regulatory RNA (sRNAs) and mRNAs to facilitate mRNA translational regulation in response to envelope stress, environmental stress and changes in metabolite concentrations. Also binds with high specificity to tRNAs. This Francisella philomiragia subsp. philomiragia (strain ATCC 25017 / CCUG 19701 / FSC 153 / O#319-036) protein is RNA-binding protein Hfq.